Here is a 681-residue protein sequence, read N- to C-terminus: Sodium-dependent phosphate transporter 1 (681 aa).

6 consecutive transmembrane segments (helical) span residues asparagine 25 to alanine 45, alanine 66 to serine 86, leucine 106 to phenylalanine 126, isoleucine 162 to phenylalanine 182, alanine 201 to glycine 221, and glycine 234 to valine 254. A disordered region spans residues valine 266–aspartate 295. Serine 269 and serine 273 each carry phosphoserine. The span at leucine 275–aspartate 295 shows a compositional bias: basic and acidic residues. A helical membrane pass occupies residues valine 514 to glycine 534. The segment at lysine 553 to alanine 560 is a. Transmembrane regions (helical) follow at residues alanine 561 to tryptophan 581, phenylalanine 602 to isoleucine 622, and isoleucine 652 to alanine 672.

It belongs to the inorganic phosphate transporter (PiT) (TC 2.A.20) family. In terms of tissue distribution, ubiquitously expressed.

Its subcellular location is the cell membrane. It catalyses the reaction 2 Na(+)(out) + phosphate(out) = 2 Na(+)(in) + phosphate(in). Sodium-phosphate symporter which preferentially transports the monovalent form of phosphate with a stoichiometry of two sodium ions per phosphate ion. May play a role in extracellular matrix and cartilage calcification as well as in vascular calcification. Essential for cell proliferation but this function is independent of its phosphate transporter activity. In terms of biological role, (Microbial infection) May function as a retroviral receptor but do not confer infection susceptibility to Gibbon Ape Leukemia Virus (GaLV), Simian sarcoma-associated virus (SSAV) and Feline leukemia virus subgroup B (FeLV-B). In Mus musculus (Mouse), this protein is Sodium-dependent phosphate transporter 1 (Slc20a1).